We begin with the raw amino-acid sequence, 369 residues long: Eukaryotic translation initiation factor 3 subunit F (369 aa).

The MPN domain maps to 31–170 (VNIQPQAVFS…TKTYISAPVA (140 aa)). A compositionally biased stretch (basic and acidic residues) spans 309–334 (LDEGKEGGEKKDGEGAEGDKKTDGQR). The interval 309–369 (LDEGKEGGEK…EPREPREAAE (61 aa)) is disordered. Residues 335–353 (GQRGQGGKRGGRSGGAGGR) show a composition bias toward gly residues. Over residues 354–369 (GGREQREPREPREAAE) the composition is skewed to basic and acidic residues.

It belongs to the eIF-3 subunit F family. As to quaternary structure, component of the eukaryotic translation initiation factor 3 (eIF-3) complex.

Its subcellular location is the cytoplasm. Functionally, component of the eukaryotic translation initiation factor 3 (eIF-3) complex, which is involved in protein synthesis of a specialized repertoire of mRNAs and, together with other initiation factors, stimulates binding of mRNA and methionyl-tRNAi to the 40S ribosome. The eIF-3 complex specifically targets and initiates translation of a subset of mRNAs involved in cell proliferation. This Neurospora crassa (strain ATCC 24698 / 74-OR23-1A / CBS 708.71 / DSM 1257 / FGSC 987) protein is Eukaryotic translation initiation factor 3 subunit F.